The primary structure comprises 197 residues: Peptidoglycan-recognition protein 1 (197 aa).

A signal peptide spans 1–23 (MKLATITFFLLTEIFFYISYAEA). Disulfide bonds link C31–C154 and C68–C74. Residues 53–180 (KPLERVVIHH…RNVKATKSPG (128 aa)) enclose the N-acetylmuramoyl-L-alanine amidase domain.

It belongs to the N-acetylmuramoyl-L-alanine amidase 2 family. As to expression, localizes to plasma (at protein level).

It localises to the secreted. In terms of biological role, peptidoglycan-recognition protein probably involved in innate immunity by binding to peptidoglycans (PGN) of bacteria and activating the prophenoloxidase (proPO) cascade immune response. Binds to 1,3-beta-D-glucan and PGN. The polypeptide is Peptidoglycan-recognition protein 1 (PGRP-1) (Holotrichia diomphalia (Korean black chafer)).